The following is a 401-amino-acid chain: Adaptive-response sensory kinase SasA (401 aa).

Residues 175 to 400 (MLVHDLRNPL…WFHFTLPVYP (226 aa)) form the Histidine kinase domain. Residue histidine 178 is modified to Phosphohistidine; by autocatalysis.

As to quaternary structure, homooligomerizes. Interacts with KaiC. Participates in the KaiABC clock complex, whose core is composed of a KaiC homohexamer, 6 KaiB and up to 6 KaiA dimers. SasA and KaiB(fs) compete to bind to KaiC.

The enzyme catalyses ATP + protein L-histidine = ADP + protein N-phospho-L-histidine.. Member of the two-component regulatory system SasA/RpaA involved in genome-wide circadian gene expression. One of several clock output pathways. Participates in the Kai clock protein complex, the main circadian regulator in cyanobacteria, via its interaction with KaiC. KaiC enhances the autophosphorylation activity of SasA, which then transfers its phosphate group to RpaA to activate it. In addition to its output function, recruits fold-shifted KaiB (KaiB(fs)) to KaiC to cooperatively form the KaiB(6):KaiC(6) complex (independent of SasA kinase activity). Required for robustness of the circadian rhythm of gene expression and is involved in clock output, also required for adaptation to light/dark cycles. This chain is Adaptive-response sensory kinase SasA, found in Trichormus variabilis (strain ATCC 29413 / PCC 7937) (Anabaena variabilis).